The chain runs to 135 residues: Nucleoside diphosphate kinase (135 aa).

ATP-binding residues include lysine 9, tyrosine 57, arginine 85, threonine 91, arginine 102, and asparagine 112. The active-site Pros-phosphohistidine intermediate is histidine 115.

Belongs to the NDK family. As to quaternary structure, homotetramer. Mg(2+) serves as cofactor.

It is found in the cytoplasm. The enzyme catalyses a 2'-deoxyribonucleoside 5'-diphosphate + ATP = a 2'-deoxyribonucleoside 5'-triphosphate + ADP. It catalyses the reaction a ribonucleoside 5'-diphosphate + ATP = a ribonucleoside 5'-triphosphate + ADP. Its function is as follows. Major role in the synthesis of nucleoside triphosphates other than ATP. The ATP gamma phosphate is transferred to the NDP beta phosphate via a ping-pong mechanism, using a phosphorylated active-site intermediate. The polypeptide is Nucleoside diphosphate kinase (Thermoanaerobacter pseudethanolicus (strain ATCC 33223 / 39E) (Clostridium thermohydrosulfuricum)).